Consider the following 466-residue polypeptide: Argininosuccinate lyase (466 aa).

The protein belongs to the lyase 1 family. Argininosuccinate lyase subfamily.

The protein localises to the cytoplasm. The enzyme catalyses 2-(N(omega)-L-arginino)succinate = fumarate + L-arginine. It functions in the pathway amino-acid biosynthesis; L-arginine biosynthesis; L-arginine from L-ornithine and carbamoyl phosphate: step 3/3. The protein is Argininosuccinate lyase of Bartonella bacilliformis (strain ATCC 35685 / KC583 / Herrer 020/F12,63).